Consider the following 199-residue polypeptide: uncharacterized protein (199 aa).

It is found in the mitochondrion. This is an uncharacterized protein from Schizosaccharomyces pombe (strain 972 / ATCC 24843) (Fission yeast).